We begin with the raw amino-acid sequence, 237 residues long: Demethylmenaquinone methyltransferase (237 aa).

S-adenosyl-L-methionine is bound by residues Thr58, Asp79, and 106-107 (NA).

The protein belongs to the class I-like SAM-binding methyltransferase superfamily. MenG/UbiE family.

The catalysed reaction is a 2-demethylmenaquinol + S-adenosyl-L-methionine = a menaquinol + S-adenosyl-L-homocysteine + H(+). It participates in quinol/quinone metabolism; menaquinone biosynthesis; menaquinol from 1,4-dihydroxy-2-naphthoate: step 2/2. Its function is as follows. Methyltransferase required for the conversion of demethylmenaquinol (DMKH2) to menaquinol (MKH2). This Listeria innocua serovar 6a (strain ATCC BAA-680 / CLIP 11262) protein is Demethylmenaquinone methyltransferase.